The primary structure comprises 243 residues: Pyridoxine 5'-phosphate synthase (243 aa).

Residue asparagine 9 coordinates 3-amino-2-oxopropyl phosphate. 11–12 contributes to the 1-deoxy-D-xylulose 5-phosphate binding site; the sequence is DH. Residue arginine 20 participates in 3-amino-2-oxopropyl phosphate binding. The Proton acceptor role is filled by histidine 45. 1-deoxy-D-xylulose 5-phosphate-binding residues include arginine 47 and histidine 52. Residue glutamate 72 is the Proton acceptor of the active site. Threonine 102 is a 1-deoxy-D-xylulose 5-phosphate binding site. Histidine 193 serves as the catalytic Proton donor. Residues glycine 194 and 215 to 216 each bind 3-amino-2-oxopropyl phosphate; that span reads GH.

This sequence belongs to the PNP synthase family. In terms of assembly, homooctamer; tetramer of dimers.

It localises to the cytoplasm. It catalyses the reaction 3-amino-2-oxopropyl phosphate + 1-deoxy-D-xylulose 5-phosphate = pyridoxine 5'-phosphate + phosphate + 2 H2O + H(+). The protein operates within cofactor biosynthesis; pyridoxine 5'-phosphate biosynthesis; pyridoxine 5'-phosphate from D-erythrose 4-phosphate: step 5/5. In terms of biological role, catalyzes the complicated ring closure reaction between the two acyclic compounds 1-deoxy-D-xylulose-5-phosphate (DXP) and 3-amino-2-oxopropyl phosphate (1-amino-acetone-3-phosphate or AAP) to form pyridoxine 5'-phosphate (PNP) and inorganic phosphate. The sequence is that of Pyridoxine 5'-phosphate synthase from Escherichia coli O157:H7.